Here is a 418-residue protein sequence, read N- to C-terminus: MLSPTNSISKTAPVPPQDSSKPVLISEEPQNQLLQKVARTALAVLLVVVTLGLILLFYSFSDLQSFPWCCQTRPSTKEQPTISIPVPLPSPPLAVPRPSTPPPPVISRPSTPPAPTPAISPPSTPSAPKPSTPPPLPPKAPKPVKTQEDLLPFVPEQVFVEMYEDMARRRIIEALVPAWDSDIIFKCLCYFHTLYPGLIPLETFPPATIFNFKQKIISILEDKKAVLRGEPIKGSLPICCSEENYRRHLQGTTLLPVFMWYHPTPKTLSDTMQTMKQLAIKGSVGASHWLLVIVDIQARRLVYFDSLYNYVMSPEDMKKDLQSFAQQLDQVYPAYDSQIFSVKIAAKEVIQKGSGSSCGAWCCQFLHWYLRDPFTDALNDLPVDSVERHENLASFVQACEAAVQDLPELFWPEAKALF.

A compositionally biased stretch (polar residues) spans 1-10 (MLSPTNSISK). A disordered region spans residues 1 to 23 (MLSPTNSISKTAPVPPQDSSKPV). The helical transmembrane segment at 40-60 (TALAVLLVVVTLGLILLFYSF) threads the bilayer. Residues 72-144 (TRPSTKEQPT…PLPPKAPKPV (73 aa)) form a disordered region. The segment covering 86–141 (VPLPSPPLAVPRPSTPPPPVISRPSTPPAPTPAISPPSTPSAPKPSTPPPLPPKAP) has biased composition (pro residues). Active-site residues include histidine 288, aspartate 305, and cysteine 358.

It belongs to the peptidase C48 family.

It localises to the secreted. The protein localises to the host cell. The protein resides in the membrane. Its function is as follows. Effector proteins function to alter host cell physiology and promote bacterial survival in host tissues. This protease possesses deubiquitinating and deneddylating activities. The sequence is that of Deubiquitinase and deneddylase Dub1 (cdu1) from Chlamydia trachomatis serovar B (strain Jali20/OT).